Consider the following 431-residue polypeptide: Serine hydroxymethyltransferase 2 (431 aa).

(6S)-5,6,7,8-tetrahydrofolate-binding positions include L131 and 135–137 (GHL). K240 bears the N6-(pyridoxal phosphate)lysine mark.

It belongs to the SHMT family. As to quaternary structure, homodimer. The cofactor is pyridoxal 5'-phosphate.

The protein resides in the cytoplasm. It catalyses the reaction (6R)-5,10-methylene-5,6,7,8-tetrahydrofolate + glycine + H2O = (6S)-5,6,7,8-tetrahydrofolate + L-serine. Its pathway is one-carbon metabolism; tetrahydrofolate interconversion. It participates in amino-acid biosynthesis; glycine biosynthesis; glycine from L-serine: step 1/1. In terms of biological role, catalyzes the reversible interconversion of serine and glycine with tetrahydrofolate (THF) serving as the one-carbon carrier. This reaction serves as the major source of one-carbon groups required for the biosynthesis of purines, thymidylate, methionine, and other important biomolecules. Also exhibits THF-independent aldolase activity toward beta-hydroxyamino acids, producing glycine and aldehydes, via a retro-aldol mechanism. This is Serine hydroxymethyltransferase 2 from Photobacterium profundum (strain SS9).